A 293-amino-acid chain; its full sequence is ATP synthase subunit a (293 aa).

A run of 8 helical transmembrane segments spans residues 39 to 59 (QVFG…VYWI), 73 to 93 (FVLL…DLIG), 102 to 122 (YFLM…LGGI), 128 to 148 (SLTF…IMGI), 172 to 192 (TLIP…SISL), 198 to 218 (ILGG…AFST), 224 to 244 (LALS…HVYF), and 245 to 265 (DVVV…NYWA).

The protein belongs to the ATPase A chain family. In terms of assembly, F-type ATPases have 2 components, CF(1) - the catalytic core - and CF(0) - the membrane proton channel. CF(1) has five subunits: alpha(3), beta(3), gamma(1), delta(1), epsilon(1). CF(0) has three main subunits: a(1), b(2) and c(9-12). The alpha and beta chains form an alternating ring which encloses part of the gamma chain. CF(1) is attached to CF(0) by a central stalk formed by the gamma and epsilon chains, while a peripheral stalk is formed by the delta and b chains.

Its subcellular location is the cell membrane. Key component of the proton channel; it plays a direct role in the translocation of protons across the membrane. This chain is ATP synthase subunit a, found in Mycoplasma pneumoniae (strain ATCC 29342 / M129 / Subtype 1) (Mycoplasmoides pneumoniae).